A 279-amino-acid chain; its full sequence is Single-strand selective monofunctional uracil DNA glycosylase (279 aa).

Residues M86, F100, and N165 each contribute to the substrate site. The DNA-binding stretch occupies residues 175–189 (SGRNLTPAELPAKQR). H241 lines the substrate pocket.

This sequence belongs to the uracil-DNA glycosylase (UDG) superfamily. SMUG1 family.

It localises to the nucleus. In terms of biological role, recognizes base lesions in the genome and initiates base excision DNA repair. Acts as a monofunctional DNA glycosylase specific for uracil (U) residues in DNA with a preference for single-stranded DNA substrates. The activity is greater toward mismatches (U/G) compared to matches (U/A). Excises uracil (U), 5-formyluracil (fU) and uracil derivatives bearing an oxidized group at C5 [5-hydroxyuracil (hoU) and 5-hydroxymethyluracil (hmU)] in ssDNA and dsDNA, but not analogous cytosine derivatives (5-hydroxycytosine and 5-formylcytosine), nor other oxidized bases. The activity is damage-specific and salt-dependent. The substrate preference is the following: ssDNA &gt; dsDNA (G pair) = dsDNA (A pair) at low salt concentration, and dsDNA (G pair) &gt; dsDNA (A pair) &gt; ssDNA at high salt concentration. The sequence is that of Single-strand selective monofunctional uracil DNA glycosylase (Smug1) from Mus musculus (Mouse).